The following is a 489-amino-acid chain: Phosphoenolpyruvate carboxykinase (ATP) (489 aa).

Residues Arg-53 and Tyr-159 each coordinate substrate. ATP is bound by residues His-185, 208-216 (GLSGTGKTT), Asp-258, Arg-300, 409-410 (KI), and Ser-415. Substrate is bound at residue Arg-300.

Belongs to the phosphoenolpyruvate carboxykinase (ATP) family.

The protein localises to the cytoplasm. The catalysed reaction is oxaloacetate + ATP = phosphoenolpyruvate + ADP + CO2. The protein operates within carbohydrate biosynthesis; gluconeogenesis. Involved in the gluconeogenesis. Catalyzes the conversion of oxaloacetate (OAA) to phosphoenolpyruvate (PEP) through direct phosphoryl transfer between the nucleoside triphosphate and OAA. This chain is Phosphoenolpyruvate carboxykinase (ATP), found in Aeropyrum pernix (strain ATCC 700893 / DSM 11879 / JCM 9820 / NBRC 100138 / K1).